We begin with the raw amino-acid sequence, 1183 residues long: DNA-directed RNA polymerase subunit beta (1183 aa).

Over residues 1153–1162 (DMQDNEEEDV) the composition is skewed to acidic residues. The disordered stretch occupies residues 1153 to 1183 (DMQDNEEEDVVERKVDLQQKDAPQSQKEVTD). Polar residues predominate over residues 1173 to 1183 (DAPQSQKEVTD).

The protein belongs to the RNA polymerase beta chain family. The RNAP catalytic core consists of 2 alpha, 1 beta, 1 beta' and 1 omega subunit. When a sigma factor is associated with the core the holoenzyme is formed, which can initiate transcription.

The enzyme catalyses RNA(n) + a ribonucleoside 5'-triphosphate = RNA(n+1) + diphosphate. DNA-dependent RNA polymerase catalyzes the transcription of DNA into RNA using the four ribonucleoside triphosphates as substrates. The polypeptide is DNA-directed RNA polymerase subunit beta (Staphylococcus saprophyticus subsp. saprophyticus (strain ATCC 15305 / DSM 20229 / NCIMB 8711 / NCTC 7292 / S-41)).